The sequence spans 2655 residues: Probable polyketide synthase 42 (2655 aa).

The 430-residue stretch at 16–445 folds into the Ketosynthase family 3 (KS3) domain; that stretch reads QNGVAVIGVG…GSNCCIILSE (430 aa). Residues Cys-186, His-325, and His-368 each act as for beta-ketoacyl synthase activity in the active site. Residues 634–667 form an acyl/malonyl transferase region; sequence GIKSDIMVGHSFGEIACSYCSGMVDFKTLCYLTY. Ser-644 serves as the catalytic For acyl/malonyl transferase activity. Positions 926-1059 are N-terminal hotdog fold; the sequence is HPTWKKANKN…ANYSLFKHND (134 aa). The region spanning 926–1234 is the PKS/mFAS DH domain; sequence HPTWKKANKN…CKSSIPIIDS (309 aa). The active-site Proton acceptor; for dehydratase activity is the His-970. The C-terminal hotdog fold stretch occupies residues 1074–1234; that stretch reads NYTIISKDEL…CKSSIPIIDS (161 aa). The active-site Proton donor; for dehydratase activity is Asp-1146. A disordered region spans residues 1700–1719; sequence YNNNNNNNNNNNNNNNNNNN. The region spanning 2517–2594 is the Carrier domain; sequence NENNNIGDLL…TTIEIIIKGY (78 aa). Ser-2554 is subject to O-(pantetheine 4'-phosphoryl)serine. The interval 2612 to 2655 is disordered; sequence SVVQKETIKDNNENKDDIKIDMDDKKENLKGKKENIDDKKENNN. The span at 2617–2655 shows a compositional bias: basic and acidic residues; sequence ETIKDNNENKDDIKIDMDDKKENLKGKKENIDDKKENNN. The stretch at 2618 to 2655 forms a coiled coil; sequence TIKDNNENKDDIKIDMDDKKENLKGKKENIDDKKENNN.

Pantetheine 4'-phosphate is required as a cofactor.

Functionally, probable polyketide synthase. In Dictyostelium discoideum (Social amoeba), this protein is Probable polyketide synthase 42 (pks42).